Consider the following 247-residue polypeptide: Protein NipSnap homolog 3A (247 aa).

N6-acetyllysine occurs at positions 48 and 166.

The protein belongs to the NipSnap family. As to quaternary structure, interacts with the Salmonella typhimurium virulence protein spiC. Ubiquitous. Highly expressed in liver, kidney and muscle. Expressed at intermediate level in brain, heart, colon, thymus, kidney, small intestine, placenta, lung, leukocytes and spleen.

It localises to the cytoplasm. It is found in the cytosol. The sequence is that of Protein NipSnap homolog 3A (NIPSNAP3A) from Homo sapiens (Human).